A 121-amino-acid chain; its full sequence is Acidic phospholipase A2 PLA-2 (121 aa).

7 cysteine pairs are disulfide-bonded: cysteine 26–cysteine 115, cysteine 28–cysteine 44, cysteine 43–cysteine 95, cysteine 49–cysteine 121, cysteine 50–cysteine 88, cysteine 57–cysteine 81, and cysteine 75–cysteine 86. Residues tyrosine 27, glycine 29, and glycine 31 each coordinate Ca(2+). Histidine 47 is an active-site residue. Aspartate 48 is a binding site for Ca(2+). Aspartate 89 is an active-site residue.

It belongs to the phospholipase A2 family. Group II subfamily. D49 sub-subfamily. Requires Ca(2+) as cofactor. As to expression, expressed by the venom gland.

Its subcellular location is the secreted. It carries out the reaction a 1,2-diacyl-sn-glycero-3-phosphocholine + H2O = a 1-acyl-sn-glycero-3-phosphocholine + a fatty acid + H(+). In terms of biological role, PLA2 catalyzes the calcium-dependent hydrolysis of the 2-acyl groups in 3-sn-phosphoglycerides. The sequence is that of Acidic phospholipase A2 PLA-2 from Eristicophis macmahoni (Leaf-nosed viper).